The chain runs to 336 residues: tRNA dimethylallyltransferase (336 aa).

Gly-19–Thr-26 is a binding site for ATP. Position 21–26 (Thr-21–Thr-26) interacts with substrate.

Belongs to the IPP transferase family. Monomer. Requires Mg(2+) as cofactor.

It carries out the reaction adenosine(37) in tRNA + dimethylallyl diphosphate = N(6)-dimethylallyladenosine(37) in tRNA + diphosphate. Functionally, catalyzes the transfer of a dimethylallyl group onto the adenine at position 37 in tRNAs that read codons beginning with uridine, leading to the formation of N6-(dimethylallyl)adenosine (i(6)A). In Bifidobacterium adolescentis (strain ATCC 15703 / DSM 20083 / NCTC 11814 / E194a), this protein is tRNA dimethylallyltransferase.